The sequence spans 524 residues: CDC50-related protein CDC50.1 (524 aa).

Composition is skewed to polar residues over residues 1-19 (MGENSTTGLRGQADVSQFS) and 26-39 (TLSSPPTGQRQQSL). Disordered regions lie at residues 1-40 (MGENSTTGLRGQADVSQFSDAAVEPTLSSPPTGQRQQSLP) and 52-86 (APSVGGGGGWPFQRQGSSRLTSRGTSLSSCSDAGS). Residues 1–181 (MGENSTTGLR…GMYPLWSAGV (181 aa)) lie on the Cytoplasmic side of the membrane. A compositionally biased stretch (low complexity) spans 67–80 (GSSRLTSRGTSLSS). The chain crosses the membrane as a helical span at residues 182–202 (VLRLCLLGALFFVSVGAWLIF). Topologically, residues 203–473 (EDEQHVECKL…VQKSRLGGRS (271 aa)) are extracellular. N-linked (GlcNAc...) asparagine glycosylation is found at N297 and N339. Residues 474 to 494 (LFIGIAYLSFGCLLTMLVFYM) form a helical membrane-spanning segment. At 495–524 (LWKKWQYRREGEEIRDLRWQTKTRGSKKTK) the chain is on the cytoplasmic side.

This sequence belongs to the CDC50/LEM3 family. Interacts with GC; the interaction regulates guanylate cyclase GC trafficking and sensing environmental changes.

Its subcellular location is the membrane. In tachyzoites, required for the cellular trafficking of guanylate cyclase GC and UGO to the cell membrane. May play a role in the folding of the GC P-type ATPase-like domain to sense vacuolar changes in phosphatidic acid and pH levels which trigger parasite egress. This chain is CDC50-related protein CDC50.1, found in Toxoplasma gondii (strain ATCC 50853 / GT1).